The sequence spans 295 residues: Small ribosomal subunit protein uS2 (295 aa).

The protein belongs to the universal ribosomal protein uS2 family.

The chain is Small ribosomal subunit protein uS2 from Rickettsia typhi (strain ATCC VR-144 / Wilmington).